We begin with the raw amino-acid sequence, 238 residues long: Survival of motor neuron-related-splicing factor 30 (238 aa).

Residues 72–132 (SWKVGDKCMA…KPVEEGRKAK (61 aa)) form the Tudor domain. Residues 142 to 160 (KKEMIAQQREYKKKKALKK) carry the Nuclear localization signal motif. Position 201 is a phosphoserine (S201). An N6-acetyllysine modification is found at K219.

The protein belongs to the SMN family. As to quaternary structure, associates with spliceosomes. Associates with U4/U5/U6 tri-snRNP and with U2 snRNP.

Its subcellular location is the nucleus speckle. The protein localises to the nucleus. The protein resides in the cajal body. Its function is as follows. Involved in spliceosome assembly. The protein is Survival of motor neuron-related-splicing factor 30 (SMNDC1) of Bos taurus (Bovine).